The sequence spans 432 residues: Adenosylhomocysteinase (432 aa).

Thr56, Asp131, and Glu156 together coordinate substrate. 157–159 (TTT) is an NAD(+) binding site. Substrate is bound by residues Lys186 and Asp190. Residues Asn191, 222–227 (GDVGKG), Glu243, 299–301 (IGH), and Asn346 each bind NAD(+).

The protein belongs to the adenosylhomocysteinase family. NAD(+) serves as cofactor.

It carries out the reaction S-adenosyl-L-homocysteine + H2O = L-homocysteine + adenosine. It participates in amino-acid biosynthesis; L-homocysteine biosynthesis; L-homocysteine from S-adenosyl-L-homocysteine: step 1/1. Its function is as follows. Adenosylhomocysteine is a competitive inhibitor of S-adenosyl-L-methionine-dependent methyl transferase reactions; therefore adenosylhomocysteinase may play a key role in the control of methylations via regulation of the intracellular concentration of adenosylhomocysteine. In Anopheles gambiae (African malaria mosquito), this protein is Adenosylhomocysteinase (Ahcy13).